The sequence spans 544 residues: Chaperonin GroEL (544 aa).

Residues 30–33, Lys51, 87–91, Gly415, 481–483, and Asp497 contribute to the ATP site; these read TLGP, DGTTT, and DAL.

The protein belongs to the chaperonin (HSP60) family. In terms of assembly, forms a cylinder of 14 subunits composed of two heptameric rings stacked back-to-back. Interacts with the co-chaperonin GroES.

The protein localises to the cytoplasm. The catalysed reaction is ATP + H2O + a folded polypeptide = ADP + phosphate + an unfolded polypeptide.. Together with its co-chaperonin GroES, plays an essential role in assisting protein folding. The GroEL-GroES system forms a nano-cage that allows encapsulation of the non-native substrate proteins and provides a physical environment optimized to promote and accelerate protein folding. The chain is Chaperonin GroEL from Chlamydia trachomatis serovar A (strain ATCC VR-571B / DSM 19440 / HAR-13).